Consider the following 739-residue polypeptide: DNA ligase (739 aa).

NAD(+) contacts are provided by residues 34–38 (DADYD), 83–84 (SL), and Glu-117. Lys-119 serves as the catalytic N6-AMP-lysine intermediate. NAD(+) is bound by residues Arg-140, Glu-175, Lys-291, and Lys-315. Residues Cys-420, Cys-423, Cys-438, and Cys-444 each coordinate Zn(2+). Positions 660–739 (ADDSPVAGKT…DGWLDLIGQA (80 aa)) constitute a BRCT domain.

This sequence belongs to the NAD-dependent DNA ligase family. LigA subfamily. Mg(2+) serves as cofactor. It depends on Mn(2+) as a cofactor.

It catalyses the reaction NAD(+) + (deoxyribonucleotide)n-3'-hydroxyl + 5'-phospho-(deoxyribonucleotide)m = (deoxyribonucleotide)n+m + AMP + beta-nicotinamide D-nucleotide.. DNA ligase that catalyzes the formation of phosphodiester linkages between 5'-phosphoryl and 3'-hydroxyl groups in double-stranded DNA using NAD as a coenzyme and as the energy source for the reaction. It is essential for DNA replication and repair of damaged DNA. The protein is DNA ligase of Ruegeria sp. (strain TM1040) (Silicibacter sp.).